We begin with the raw amino-acid sequence, 246 residues long: Ubiquinone/menaquinone biosynthesis C-methyltransferase UbiE (246 aa).

S-adenosyl-L-methionine is bound by residues threonine 75, aspartate 95, and 119-120 (DA).

Belongs to the class I-like SAM-binding methyltransferase superfamily. MenG/UbiE family.

It carries out the reaction a 2-demethylmenaquinol + S-adenosyl-L-methionine = a menaquinol + S-adenosyl-L-homocysteine + H(+). The enzyme catalyses a 2-methoxy-6-(all-trans-polyprenyl)benzene-1,4-diol + S-adenosyl-L-methionine = a 5-methoxy-2-methyl-3-(all-trans-polyprenyl)benzene-1,4-diol + S-adenosyl-L-homocysteine + H(+). It participates in quinol/quinone metabolism; menaquinone biosynthesis; menaquinol from 1,4-dihydroxy-2-naphthoate: step 2/2. It functions in the pathway cofactor biosynthesis; ubiquinone biosynthesis. Its function is as follows. Methyltransferase required for the conversion of demethylmenaquinol (DMKH2) to menaquinol (MKH2) and the conversion of 2-polyprenyl-6-methoxy-1,4-benzoquinol (DDMQH2) to 2-polyprenyl-3-methyl-6-methoxy-1,4-benzoquinol (DMQH2). In Desulfotalea psychrophila (strain LSv54 / DSM 12343), this protein is Ubiquinone/menaquinone biosynthesis C-methyltransferase UbiE.